The chain runs to 794 residues: Transcription factor TOG1 (794 aa).

The Zn(2+) site is built by cysteine 18, cysteine 21, cysteine 28, cysteine 34, cysteine 37, and cysteine 44. The zn(2)-C6 fungal-type DNA-binding region spans 18-44; it reads CDRCHRKKIKCNSKKPCFGCIGSQSKC.

It is found in the nucleus. Transcriptional activator required for growth on non-fermentable carbon sources and that regulates genes involved in fatty acid utilization. Acts as a direct activator that binds the promoters of oleate utilizing genes, encoded key enzymes in beta-oxidation and NADPH regeneration (POX1, FOX2,POT1 and IDP2), the glyoxylate shunt (MLS1 and ICL1), and gluconeogenesis (PCK1 and FBP1). Also regulates the abundance of peroxisomes that are vital for fatty acid oxidation. This is Transcription factor TOG1 from Saccharomyces cerevisiae (strain ATCC 204508 / S288c) (Baker's yeast).